A 118-amino-acid chain; its full sequence is Large ribosomal subunit protein bL20 (118 aa).

Belongs to the bacterial ribosomal protein bL20 family.

Functionally, binds directly to 23S ribosomal RNA and is necessary for the in vitro assembly process of the 50S ribosomal subunit. It is not involved in the protein synthesizing functions of that subunit. This Salmonella arizonae (strain ATCC BAA-731 / CDC346-86 / RSK2980) protein is Large ribosomal subunit protein bL20.